The following is a 78-amino-acid chain: Keratin-associated protein 6-5 (78 aa).

The segment at 3 to 76 (GYYGNYYGGR…GSGYGSGFGY (74 aa)) is 25 X 2 AA repeats of G-[YCGS].

This sequence belongs to the KRTAP type 6 family. In terms of assembly, interacts with hair keratins. Strong expression in narrowly defined pattern restricted to the lower and middle cortical regions of the hair shaft in both developing and cycling hair. During hair follicle regression (catagen), expression levels decrease until expression is no longer detectable in follicles at resting stage (telogen).

Functionally, in the hair cortex, hair keratin intermediate filaments are embedded in an interfilamentous matrix, consisting of hair keratin-associated proteins (KRTAP), which are essential for the formation of a rigid and resistant hair shaft through their extensive disulfide bond cross-linking with abundant cysteine residues of hair keratins. The matrix proteins include the high-sulfur and high-glycine-tyrosine keratins. This is Keratin-associated protein 6-5 (Krtap6-5) from Mus musculus (Mouse).